The sequence spans 107 residues: Phosphoribosyl-ATP pyrophosphatase (107 aa).

This sequence belongs to the PRA-PH family.

It is found in the cytoplasm. The enzyme catalyses 1-(5-phospho-beta-D-ribosyl)-ATP + H2O = 1-(5-phospho-beta-D-ribosyl)-5'-AMP + diphosphate + H(+). It functions in the pathway amino-acid biosynthesis; L-histidine biosynthesis; L-histidine from 5-phospho-alpha-D-ribose 1-diphosphate: step 2/9. The polypeptide is Phosphoribosyl-ATP pyrophosphatase (Bacillus mycoides (strain KBAB4) (Bacillus weihenstephanensis)).